The following is a 992-amino-acid chain: UPF0182 protein BCG_3215c (992 aa).

The next 7 membrane-spanning stretches (helical) occupy residues 18-38 (ILIMIALGVIVLLLAGPRLID), 63-83 (IVVCLVAGVVVGGIVFGGLAL), 113-133 (LVGIGIPAAIGLLAGIVAQSY), 175-195 (LVSVFLAFVANLVAHYIFGGI), 210-230 (VQLVSLVGVLVLLKAVAYWLD), 259-279 (KLILMAIALICAAAVFSAIAL), and 287-307 (IGLVLLLLSSLIVGAGWPLIV). The disordered stretch occupies residues 906–938 (PTEAAVPPSPAANPPPPASGPQPPPVTAAPPVP). The span at 912-938 (PPSPAANPPPPASGPQPPPVTAAPPVP) shows a compositional bias: pro residues.

It belongs to the UPF0182 family.

It is found in the cell membrane. The sequence is that of UPF0182 protein BCG_3215c from Mycobacterium bovis (strain BCG / Pasteur 1173P2).